The chain runs to 834 residues: DNA polymerase I, thermostable (834 aa).

Residues 176-262 enclose the 5'-3' exonuclease domain; that stretch reads KPEQWVDFRA…DLPLEVDLAQ (87 aa). A polymerase region spans residues 412-834; sequence ERLHRNLLKR…MGEDWLSAKG (423 aa).

It belongs to the DNA polymerase type-A family.

The enzyme catalyses DNA(n) + a 2'-deoxyribonucleoside 5'-triphosphate = DNA(n+1) + diphosphate. In terms of biological role, has 5'-3' exonuclease activity and no 3'-5' exonuclease activity. The chain is DNA polymerase I, thermostable (polA) from Thermus caldophilus.